The following is a 173-amino-acid chain: Alpha-crystallin A chain (173 aa).

Position 1 is an N-acetylmethionine (Met1). The interval 1–63 (MDIAIQHPWF…RTVLDSGISE (63 aa)) is required for complex formation with BFSP1 and BFSP2. At Gln6 the chain carries Deamidated glutamine; partial. Residue Ser45 is modified to Phosphoserine. Gln50 is subject to Deamidated glutamine; partial. Positions 52–162 (LFRTVLDSGI…GHSERAIPVS (111 aa)) constitute a sHSP domain. Lys70 is modified (N6-acetyllysine). The residue at position 90 (Gln90) is a Deamidated glutamine; partial. Lys99 is subject to N6-acetyllysine. Residue His100 coordinates Zn(2+). Asn101 carries the post-translational modification Deamidated asparagine; partial. Residues Glu102 and His107 each contribute to the Zn(2+) site. Position 122 is a phosphoserine (Ser122). Asn123 is modified (deamidated asparagine; partial). The interval 144-173 (PKIPSGMDAGHSERAIPVSREEKPGSAPSS) is disordered. The span at 153 to 167 (GHSERAIPVSREEKP) shows a compositional bias: basic and acidic residues. His154 contributes to the Zn(2+) binding site. An O-linked (GlcNAc) serine glycan is attached at Ser162.

It belongs to the small heat shock protein (HSP20) family. As to quaternary structure, heteromer composed of three CRYAA and one CRYAB subunits. Inter-subunit bridging via zinc ions enhances stability, which is crucial as there is no protein turn over in the lens. Can also form homodimers and homotetramers (dimers of dimers) which serve as the building blocks of homooligomers. Within homooligomers, the zinc-binding motif is created from residues of 3 different molecules. His-100 and Glu-102 from one molecule are ligands of the zinc ion, and His-107 and His-154 residues from additional molecules complete the site with tetrahedral coordination geometry. Part of a complex required for lens intermediate filament formation composed of BFSP1, BFSP2 and CRYAA. Post-translationally, acetylation at Lys-70 may increase chaperone activity. Undergoes age-dependent proteolytical cleavage at the C-terminus.

Its subcellular location is the cytoplasm. The protein localises to the nucleus. In terms of biological role, contributes to the transparency and refractive index of the lens. Acts as a chaperone, preventing aggregation of various proteins under a wide range of stress conditions. Required for the correct formation of lens intermediate filaments as part of a complex composed of BFSP1, BFSP2 and CRYAA. In Equus caballus (Horse), this protein is Alpha-crystallin A chain (CRYAA).